The primary structure comprises 574 residues: Proline--tRNA ligase (574 aa).

The protein belongs to the class-II aminoacyl-tRNA synthetase family. ProS type 1 subfamily. As to quaternary structure, homodimer.

Its subcellular location is the cytoplasm. It carries out the reaction tRNA(Pro) + L-proline + ATP = L-prolyl-tRNA(Pro) + AMP + diphosphate. In terms of biological role, catalyzes the attachment of proline to tRNA(Pro) in a two-step reaction: proline is first activated by ATP to form Pro-AMP and then transferred to the acceptor end of tRNA(Pro). As ProRS can inadvertently accommodate and process non-cognate amino acids such as alanine and cysteine, to avoid such errors it has two additional distinct editing activities against alanine. One activity is designated as 'pretransfer' editing and involves the tRNA(Pro)-independent hydrolysis of activated Ala-AMP. The other activity is designated 'posttransfer' editing and involves deacylation of mischarged Ala-tRNA(Pro). The misacylated Cys-tRNA(Pro) is not edited by ProRS. This Teredinibacter turnerae (strain ATCC 39867 / T7901) protein is Proline--tRNA ligase.